The sequence spans 188 residues: Der GTPase-activating protein YihI (188 aa).

Disordered stretches follow at residues 1–80 and 162–188; these read MKQP…VPVP and DEDDVEREEKQEDILQLLKRGNPKDTF. Residues 27 to 37 show a composition bias toward basic and acidic residues; the sequence is TRDELDAEARD. Residues 47 to 57 show a composition bias toward polar residues; that stretch reads NRSGARTNVEG.

This sequence belongs to the YihI family. Interacts with Der.

In terms of biological role, a GTPase-activating protein (GAP) that modifies Der/EngA GTPase function. May play a role in ribosome biogenesis. This chain is Der GTPase-activating protein YihI, found in Yersinia pseudotuberculosis serotype O:3 (strain YPIII).